The chain runs to 294 residues: UDP-3-O-acyl-N-acetylglucosamine deacetylase (294 aa).

Zn(2+) is bound by residues His75, His232, and Asp236. His259 serves as the catalytic Proton donor.

It belongs to the LpxC family. It depends on Zn(2+) as a cofactor.

The enzyme catalyses a UDP-3-O-[(3R)-3-hydroxyacyl]-N-acetyl-alpha-D-glucosamine + H2O = a UDP-3-O-[(3R)-3-hydroxyacyl]-alpha-D-glucosamine + acetate. It functions in the pathway glycolipid biosynthesis; lipid IV(A) biosynthesis; lipid IV(A) from (3R)-3-hydroxytetradecanoyl-[acyl-carrier-protein] and UDP-N-acetyl-alpha-D-glucosamine: step 2/6. Its function is as follows. Catalyzes the hydrolysis of UDP-3-O-myristoyl-N-acetylglucosamine to form UDP-3-O-myristoylglucosamine and acetate, the committed step in lipid A biosynthesis. The polypeptide is UDP-3-O-acyl-N-acetylglucosamine deacetylase (Sulfurimonas denitrificans (strain ATCC 33889 / DSM 1251) (Thiomicrospira denitrificans (strain ATCC 33889 / DSM 1251))).